The chain runs to 34 residues: Photosystem II reaction center protein M (34 aa).

The chain crosses the membrane as a helical span at residues 5-25; the sequence is ILAVIATALFVLIPTAFLLIL.

It belongs to the PsbM family. PSII is composed of 1 copy each of membrane proteins PsbA, PsbB, PsbC, PsbD, PsbE, PsbF, PsbH, PsbI, PsbJ, PsbK, PsbL, PsbM, PsbT, PsbX, PsbY, PsbZ, Psb30/Ycf12, at least 3 peripheral proteins of the oxygen-evolving complex and a large number of cofactors. It forms dimeric complexes.

The protein resides in the plastid. It localises to the chloroplast thylakoid membrane. One of the components of the core complex of photosystem II (PSII). PSII is a light-driven water:plastoquinone oxidoreductase that uses light energy to abstract electrons from H(2)O, generating O(2) and a proton gradient subsequently used for ATP formation. It consists of a core antenna complex that captures photons, and an electron transfer chain that converts photonic excitation into a charge separation. This subunit is found at the monomer-monomer interface. The sequence is that of Photosystem II reaction center protein M from Chaetosphaeridium globosum (Charophycean green alga).